Reading from the N-terminus, the 503-residue chain is Aspartyl/glutamyl-tRNA(Asn/Gln) amidotransferase subunit B (503 aa).

It belongs to the GatB/GatE family. GatB subfamily. As to quaternary structure, heterotrimer of A, B and C subunits.

It carries out the reaction L-glutamyl-tRNA(Gln) + L-glutamine + ATP + H2O = L-glutaminyl-tRNA(Gln) + L-glutamate + ADP + phosphate + H(+). The catalysed reaction is L-aspartyl-tRNA(Asn) + L-glutamine + ATP + H2O = L-asparaginyl-tRNA(Asn) + L-glutamate + ADP + phosphate + 2 H(+). Allows the formation of correctly charged Asn-tRNA(Asn) or Gln-tRNA(Gln) through the transamidation of misacylated Asp-tRNA(Asn) or Glu-tRNA(Gln) in organisms which lack either or both of asparaginyl-tRNA or glutaminyl-tRNA synthetases. The reaction takes place in the presence of glutamine and ATP through an activated phospho-Asp-tRNA(Asn) or phospho-Glu-tRNA(Gln). This is Aspartyl/glutamyl-tRNA(Asn/Gln) amidotransferase subunit B from Rhodococcus jostii (strain RHA1).